The sequence spans 353 residues: MTTALRQRESANAWEQFCQWIASTENRLYVGWFGVIMIPTLLTATICFIIAFIAAPPVDIDGIREPVAGSLMYGNNIISGAVVPSSNAIGLHFYPIWEAASMDEWLYNGGPYQLVVFHFLIGIFCYMGREWELSYRLGMRPWICVAYSAPVAAATAVFLIYPLGQGSFSDGMPLGISGTFNFMLVFQAEHNILMHPFHMLGVAGVFGGSLFSAMHGSLVTSSLVRETSENESQNYGYKFGQEEETYNIVAAHGYFGRLIFQYASFNNSRALHFFLAAWPVVGIWFTSLGISTMAFNLNGFNFNQSVMDSQGRVISTWADILNRANLGFEVMHERNAHNFPLDLAAVKAPSIIG.

Transmembrane regions (helical) follow at residues 29-46 (YVGW…TATI), 118-133 (HFLI…EWEL), and 142-156 (WICV…AATA). Histidine 118 is a binding site for chlorophyll a. Residue tyrosine 126 participates in pheophytin a binding. Residues aspartate 170 and glutamate 189 each coordinate [CaMn4O5] cluster. Residues 197 to 218 (FHMLGVAGVFGGSLFSAMHGSL) form a helical membrane-spanning segment. Histidine 198 is a chlorophyll a binding site. Residues histidine 215 and 264–265 (SF) contribute to the a quinone site. Residue histidine 215 coordinates Fe cation. Residue histidine 272 participates in Fe cation binding. A helical transmembrane segment spans residues 274 to 288 (FLAAWPVVGIWFTSL). Residues histidine 332, glutamate 333, aspartate 342, and alanine 344 each contribute to the [CaMn4O5] cluster site. A propeptide spanning residues 345–353 (AVKAPSIIG) is cleaved from the precursor.

The protein belongs to the reaction center PufL/M/PsbA/D family. As to quaternary structure, PSII is composed of 1 copy each of membrane proteins PsbA, PsbB, PsbC, PsbD, PsbE, PsbF, PsbH, PsbI, PsbJ, PsbK, PsbL, PsbM, PsbT, PsbX, PsbY, PsbZ, Psb30/Ycf12, peripheral proteins PsbO, CyanoQ (PsbQ), PsbU, PsbV and a large number of cofactors. It forms dimeric complexes. Requires The D1/D2 heterodimer binds P680, chlorophylls that are the primary electron donor of PSII, and subsequent electron acceptors. It shares a non-heme iron and each subunit binds pheophytin, quinone, additional chlorophylls, carotenoids and lipids. D1 provides most of the ligands for the Mn4-Ca-O5 cluster of the oxygen-evolving complex (OEC). There is also a Cl(-1) ion associated with D1 and D2, which is required for oxygen evolution. The PSII complex binds additional chlorophylls, carotenoids and specific lipids. as cofactor. Post-translationally, tyr-161 forms a radical intermediate that is referred to as redox-active TyrZ, YZ or Y-Z. C-terminally processed by CtpA; processing is essential to allow assembly of the oxygen-evolving complex and thus photosynthetic growth.

The protein resides in the cellular thylakoid membrane. The catalysed reaction is 2 a plastoquinone + 4 hnu + 2 H2O = 2 a plastoquinol + O2. Photosystem II (PSII) is a light-driven water:plastoquinone oxidoreductase that uses light energy to abstract electrons from H(2)O, generating O(2) and a proton gradient subsequently used for ATP formation. It consists of a core antenna complex that captures photons, and an electron transfer chain that converts photonic excitation into a charge separation. The D1/D2 (PsbA/PsbD) reaction center heterodimer binds P680, the primary electron donor of PSII as well as several subsequent electron acceptors. The sequence is that of Photosystem II protein D1 from Prochlorothrix hollandica.